The following is a 433-amino-acid chain: PHO85 cyclin-10 (433 aa).

Residues 1–10 show a composition bias toward basic and acidic residues; that stretch reads MDMTKNHTTD. 2 disordered regions span residues 1–20 and 51–81; these read MDMT…GDIR and LTSE…TTDS. The span at 51–63 shows a compositional bias: polar residues; that stretch reads LTSEWDQSRSNTP.

It belongs to the cyclin family. PHO80 subfamily. As to quaternary structure, forms a cyclin-CDK complex with PHO85. Interacts with GSY2, independent of the presence of PHO85.

It localises to the cytoplasm. In terms of biological role, cyclin partner of the cyclin-dependent kinase (CDK) PHO85. Together with cyclin PCL8, negatively controls glycogen accumulation under favorable growth conditions. The PCL10-PHO85 cyclin-CDK holoenzyme has glycogen synthase kinase activity and phosphorylates and negatively regulates glycogen synthase GSY2. Also has minor GLC8 kinase activity. In Saccharomyces cerevisiae (strain ATCC 204508 / S288c) (Baker's yeast), this protein is PHO85 cyclin-10 (PCL10).